Reading from the N-terminus, the 263-residue chain is Tryptophan synthase alpha chain (263 aa).

Residues E49 and D60 each act as proton acceptor in the active site.

This sequence belongs to the TrpA family. Tetramer of two alpha and two beta chains.

The enzyme catalyses (1S,2R)-1-C-(indol-3-yl)glycerol 3-phosphate + L-serine = D-glyceraldehyde 3-phosphate + L-tryptophan + H2O. It functions in the pathway amino-acid biosynthesis; L-tryptophan biosynthesis; L-tryptophan from chorismate: step 5/5. In terms of biological role, the alpha subunit is responsible for the aldol cleavage of indoleglycerol phosphate to indole and glyceraldehyde 3-phosphate. The sequence is that of Tryptophan synthase alpha chain from Roseobacter denitrificans (strain ATCC 33942 / OCh 114) (Erythrobacter sp. (strain OCh 114)).